The chain runs to 354 residues: Probable tartrate dehydrogenase/decarboxylase (354 aa).

3 residues coordinate Mn(2+): Asp221, Asp245, and Asp249.

The protein belongs to the isocitrate and isopropylmalate dehydrogenases family. Mg(2+) is required as a cofactor. Mn(2+) serves as cofactor. It depends on K(+) as a cofactor.

It catalyses the reaction tartrate + NAD(+) = 2-hydroxy-3-oxosuccinate + NADH + H(+). It carries out the reaction (2R,3S)-tartrate + NAD(+) = 2-hydroxy-3-oxosuccinate + NADH + H(+). The enzyme catalyses (2R,3R)-tartrate + NAD(+) = 2-hydroxy-3-oxosuccinate + NADH + H(+). The catalysed reaction is (2R,3R)-tartrate + H(+) = (R)-glycerate + CO2. It catalyses the reaction (R)-malate + NAD(+) = pyruvate + CO2 + NADH. Has multiple catalytic activities. Apart from catalyzing the oxidation of (+)-tartrate to oxaloglycolate, also converts meso-tartrate to D-glycerate and catalyzes the oxidative decarboxylation of D-malate to pyruvate. The chain is Probable tartrate dehydrogenase/decarboxylase (ycsA) from Bacillus subtilis (strain 168).